Reading from the N-terminus, the 1584-residue chain is Pentafunctional AROM polypeptide (1584 aa).

Residues 1–384 form a 3-dehydroquinate synthase region; it reads MSQDTDVVSV…YEKHATVVSD (384 aa). NAD(+)-binding positions include 46–48, 83–86, 114–116, and aspartate 119; these read DTN, ETSK, and GGV. Arginine 130 contributes to the 7-phospho-2-dehydro-3-deoxy-D-arabino-heptonate binding site. 139-140 provides a ligand contact to NAD(+); the sequence is TT. Aspartate 146 and lysine 152 together coordinate 7-phospho-2-dehydro-3-deoxy-D-arabino-heptonate. Lysine 161 is a binding site for NAD(+). Asparagine 162 serves as a coordination point for 7-phospho-2-dehydro-3-deoxy-D-arabino-heptonate. Residues 179–182 and asparagine 190 each bind NAD(+); that span reads FLET. Position 194 (glutamate 194) interacts with Zn(2+). Residues 194–197 and lysine 250 each bind 7-phospho-2-dehydro-3-deoxy-D-arabino-heptonate; that span reads EVIK. Glutamate 260 serves as the catalytic Proton acceptor; for 3-dehydroquinate synthase activity. Residues 264-268 and histidine 271 contribute to the 7-phospho-2-dehydro-3-deoxy-D-arabino-heptonate site; that span reads RNLLN. A Zn(2+)-binding site is contributed by histidine 271. Histidine 275 acts as the Proton acceptor; for 3-dehydroquinate synthase activity in catalysis. 7-phospho-2-dehydro-3-deoxy-D-arabino-heptonate contacts are provided by histidine 287 and lysine 356. Histidine 287 contacts Zn(2+). The interval 397-843 is EPSP synthase; sequence VSPFDNSVSD…WDVLRNSFKI (447 aa). The For EPSP synthase activity role is filled by cysteine 825. The segment at 863–1058 is shikimate kinase; that stretch reads RASVILIGMR…IQKPHSFFLS (196 aa). 870–877 is an ATP binding site; sequence GMRGAGKT. The segment at 1059–1280 is 3-dehydroquinase; it reads LTFPNINDAI…AAPGQLSVRQ (222 aa). Residue histidine 1182 is the Proton acceptor; for 3-dehydroquinate dehydratase activity of the active site. Lysine 1211 functions as the Schiff-base intermediate with substrate; for 3-dehydroquinate dehydratase activity in the catalytic mechanism. The shikimate dehydrogenase stretch occupies residues 1293–1584; it reads PKKFYLFGTP…YMVLCAKEHN (292 aa).

In the N-terminal section; belongs to the sugar phosphate cyclases superfamily. Dehydroquinate synthase family. The protein in the 2nd section; belongs to the EPSP synthase family. It in the 3rd section; belongs to the shikimate kinase family. This sequence in the 4th section; belongs to the type-I 3-dehydroquinase family. In the C-terminal section; belongs to the shikimate dehydrogenase family. Homodimer. Zn(2+) is required as a cofactor.

Its subcellular location is the cytoplasm. The enzyme catalyses 7-phospho-2-dehydro-3-deoxy-D-arabino-heptonate = 3-dehydroquinate + phosphate. The catalysed reaction is 3-dehydroquinate = 3-dehydroshikimate + H2O. It catalyses the reaction shikimate + NADP(+) = 3-dehydroshikimate + NADPH + H(+). It carries out the reaction shikimate + ATP = 3-phosphoshikimate + ADP + H(+). The enzyme catalyses 3-phosphoshikimate + phosphoenolpyruvate = 5-O-(1-carboxyvinyl)-3-phosphoshikimate + phosphate. It participates in metabolic intermediate biosynthesis; chorismate biosynthesis; chorismate from D-erythrose 4-phosphate and phosphoenolpyruvate: step 2/7. Its pathway is metabolic intermediate biosynthesis; chorismate biosynthesis; chorismate from D-erythrose 4-phosphate and phosphoenolpyruvate: step 3/7. The protein operates within metabolic intermediate biosynthesis; chorismate biosynthesis; chorismate from D-erythrose 4-phosphate and phosphoenolpyruvate: step 4/7. It functions in the pathway metabolic intermediate biosynthesis; chorismate biosynthesis; chorismate from D-erythrose 4-phosphate and phosphoenolpyruvate: step 5/7. It participates in metabolic intermediate biosynthesis; chorismate biosynthesis; chorismate from D-erythrose 4-phosphate and phosphoenolpyruvate: step 6/7. The AROM polypeptide catalyzes 5 consecutive enzymatic reactions in prechorismate polyaromatic amino acid biosynthesis. The polypeptide is Pentafunctional AROM polypeptide (Schizosaccharomyces japonicus (strain yFS275 / FY16936) (Fission yeast)).